The primary structure comprises 381 residues: Carboxylesterase 5A (381 aa).

Catalysis depends on S108, which acts as the Acyl-ester intermediate. A disulfide bridge connects residues C162 and C173. Residue N163 is glycosylated (N-linked (GlcNAc...) asparagine). E227 acts as the Charge relay system in catalysis. N-linked (GlcNAc...) asparagine glycosylation is present at N245. The Charge relay system role is filled by H336.

It belongs to the type-B carboxylesterase/lipase family. In terms of assembly, component of a epididymal complex at least composed of soluble form of prion protein PRNP, CLU, BPI, CES5A, MANBA and GLB1. N-glycosylated. In terms of tissue distribution, detected in corpus and cauda epididymal fluid. Present in seminal fluid but not found to be associated with sperm (at protein level). Not expressed in other tissues.

Its subcellular location is the secreted. It catalyses the reaction a carboxylic ester + H2O = an alcohol + a carboxylate + H(+). Involved in the detoxification of xenobiotics and in the activation of ester and amide prodrugs. This chain is Carboxylesterase 5A (CES5A), found in Ovis aries (Sheep).